We begin with the raw amino-acid sequence, 342 residues long: tRNA dimethylallyltransferase (342 aa).

Gly-39 to Thr-46 provides a ligand contact to ATP. Thr-41–Thr-46 is a substrate binding site. Residues Asp-64 to Gln-67 are interaction with substrate tRNA.

It belongs to the IPP transferase family. Monomer. Mg(2+) serves as cofactor.

It carries out the reaction adenosine(37) in tRNA + dimethylallyl diphosphate = N(6)-dimethylallyladenosine(37) in tRNA + diphosphate. Catalyzes the transfer of a dimethylallyl group onto the adenine at position 37 in tRNAs that read codons beginning with uridine, leading to the formation of N6-(dimethylallyl)adenosine (i(6)A). This is tRNA dimethylallyltransferase from Chlamydia felis (strain Fe/C-56) (Chlamydophila felis).